We begin with the raw amino-acid sequence, 105 residues long: Ig lambda-1 chain C region (105 aa).

Residues 6-100 (PSVTLFPPSS…EGHTVEKSLS (95 aa)) form the Ig-like domain. A disulfide bridge links Cys-27 with Cys-86.

The protein is Ig lambda-1 chain C region of Mus musculus (Mouse).